The following is a 306-amino-acid chain: Pentalenolactone F synthase (306 aa).

Residues H110 and D112 each coordinate Fe cation. 2 residues coordinate 2-oxoglutarate: T138 and W258. H273 is a binding site for Fe cation. R284 is a 2-oxoglutarate binding site.

The protein belongs to the TfdA dioxygenase family. The cofactor is Fe(2+).

It catalyses the reaction pentalenolactone D + 2 2-oxoglutarate + 2 O2 = pentalenolactone F + 2 succinate + 2 CO2 + H2O. It functions in the pathway antibiotic biosynthesis; neopentalenolactone biosynthesis. Its activity is regulated as follows. Activated by ascorbate. In terms of biological role, catalyzes the Fe(2+) and alpha-ketoglutarate-dependent oxidation of pentalenolactone D to pentalenolactone F. Also able to catalyze the oxidation of pentalenolactone D to pentalenolactone E. In presence of neopentalenolactone D, mediates production of PL308 and possibly neopentalenolactone E. The chain is Pentalenolactone F synthase (ptlD) from Streptomyces avermitilis (strain ATCC 31267 / DSM 46492 / JCM 5070 / NBRC 14893 / NCIMB 12804 / NRRL 8165 / MA-4680).